A 236-amino-acid polypeptide reads, in one-letter code: uncharacterized protein (236 aa).

Residues 3–116 (TCLIVDDELF…RLSKTLKRVR (114 aa)) enclose the Response regulatory domain. At D54 the chain carries 4-aspartylphosphate. In terms of domain architecture, HTH LytTR-type spans 135–235 (LPCYSGSKLK…LKSLKQLFGF (101 aa)).

This is an uncharacterized protein from Shewanella oneidensis (strain ATCC 700550 / JCM 31522 / CIP 106686 / LMG 19005 / NCIMB 14063 / MR-1).